A 492-amino-acid polypeptide reads, in one-letter code: Polyamine oxidase 5 (492 aa).

The FAD site is built by E55, R63, V244, and E431. A Microbody targeting signal motif is present at residues 490 to 492 (SRL).

This sequence belongs to the flavin monoamine oxidase family. FAD serves as cofactor. Widely expressed.

It localises to the peroxisome. It catalyses the reaction spermine + O2 + H2O = 3-aminopropanal + spermidine + H2O2. The catalysed reaction is norspermine + O2 + H2O = norspermidine + 3-aminopropanal + H2O2. It carries out the reaction thermospermine + O2 + H2O = 3-aminopropanal + spermidine + H2O2. Its pathway is amine and polyamine degradation; spermine degradation. Functionally, flavoenzyme involved in polyamine back-conversion. Catalyzes the oxidation of the secondary amino group of polyamines, such as spermine. Substrate preference is spermine &gt; thermospermine &gt; norspermine. No activity detected when putrescine, spermidine or N(1)-acetylspermidine are used as substrates. Plays an important role in the regulation of polyamine intracellular concentration. May play a role in producing hydrogen peroxide during seed germination. This is Polyamine oxidase 5 from Oryza sativa subsp. japonica (Rice).